A 172-amino-acid polypeptide reads, in one-letter code: 3-phenylpropionate/cinnamic acid dioxygenase subunit beta (172 aa).

It belongs to the bacterial ring-hydroxylating dioxygenase beta subunit family. In terms of assembly, this dioxygenase system consists of four proteins: the two subunits of the hydroxylase component (HcaE and HcaF), a ferredoxin (HcaC) and a ferredoxin reductase (HcaD).

The catalysed reaction is 3-phenylpropanoate + NADH + O2 + H(+) = 3-(cis-5,6-dihydroxycyclohexa-1,3-dien-1-yl)propanoate + NAD(+). The enzyme catalyses (E)-cinnamate + NADH + O2 + H(+) = (2E)-3-(cis-5,6-dihydroxycyclohexa-1,3-dien-1-yl)prop-2-enoate + NAD(+). It functions in the pathway aromatic compound metabolism; 3-phenylpropanoate degradation. In terms of biological role, part of the multicomponent 3-phenylpropionate dioxygenase. Converts 3-phenylpropionic acid (PP) and cinnamic acid (CI) into 3-phenylpropionate-dihydrodiol (PP-dihydrodiol) and cinnamic acid-dihydrodiol (CI-dihydrodiol), respectively. The chain is 3-phenylpropionate/cinnamic acid dioxygenase subunit beta from Shigella flexneri serotype 5b (strain 8401).